Here is a 266-residue protein sequence, read N- to C-terminus: Glucosamine-6-phosphate deaminase (266 aa).

Asp72 functions as the Proton acceptor; for enolization step in the catalytic mechanism. Asp141 serves as the catalytic For ring-opening step. Residue His143 is the Proton acceptor; for ring-opening step of the active site. Glu148 serves as the catalytic For ring-opening step.

It belongs to the glucosamine/galactosamine-6-phosphate isomerase family. NagB subfamily. Homohexamer.

It carries out the reaction alpha-D-glucosamine 6-phosphate + H2O = beta-D-fructose 6-phosphate + NH4(+). The protein operates within amino-sugar metabolism; N-acetylneuraminate degradation; D-fructose 6-phosphate from N-acetylneuraminate: step 5/5. Allosterically activated by N-acetylglucosamine 6-phosphate (GlcNAc6P). Functionally, catalyzes the reversible isomerization-deamination of glucosamine 6-phosphate (GlcN6P) to form fructose 6-phosphate (Fru6P) and ammonium ion. The polypeptide is Glucosamine-6-phosphate deaminase (Edwardsiella ictaluri (strain 93-146)).